The primary structure comprises 471 residues: 3-isopropylmalate dehydratase large subunit (471 aa).

Cys-349, Cys-409, and Cys-412 together coordinate [4Fe-4S] cluster.

It belongs to the aconitase/IPM isomerase family. LeuC type 1 subfamily. In terms of assembly, heterodimer of LeuC and LeuD. [4Fe-4S] cluster serves as cofactor.

It carries out the reaction (2R,3S)-3-isopropylmalate = (2S)-2-isopropylmalate. It participates in amino-acid biosynthesis; L-leucine biosynthesis; L-leucine from 3-methyl-2-oxobutanoate: step 2/4. In terms of biological role, catalyzes the isomerization between 2-isopropylmalate and 3-isopropylmalate, via the formation of 2-isopropylmaleate. This chain is 3-isopropylmalate dehydratase large subunit, found in Aliivibrio salmonicida (strain LFI1238) (Vibrio salmonicida (strain LFI1238)).